The primary structure comprises 156 residues: ATP synthase subunit b (156 aa).

Residues 5 to 25 traverse the membrane as a helical segment; the sequence is VTLIGQTVAFIIFVWFCMKFV.

The protein belongs to the ATPase B chain family. In terms of assembly, F-type ATPases have 2 components, F(1) - the catalytic core - and F(0) - the membrane proton channel. F(1) has five subunits: alpha(3), beta(3), gamma(1), delta(1), epsilon(1). F(0) has three main subunits: a(1), b(2) and c(10-14). The alpha and beta chains form an alternating ring which encloses part of the gamma chain. F(1) is attached to F(0) by a central stalk formed by the gamma and epsilon chains, while a peripheral stalk is formed by the delta and b chains.

It localises to the cell inner membrane. Its function is as follows. F(1)F(0) ATP synthase produces ATP from ADP in the presence of a proton or sodium gradient. F-type ATPases consist of two structural domains, F(1) containing the extramembraneous catalytic core and F(0) containing the membrane proton channel, linked together by a central stalk and a peripheral stalk. During catalysis, ATP synthesis in the catalytic domain of F(1) is coupled via a rotary mechanism of the central stalk subunits to proton translocation. Component of the F(0) channel, it forms part of the peripheral stalk, linking F(1) to F(0). In Shewanella loihica (strain ATCC BAA-1088 / PV-4), this protein is ATP synthase subunit b.